Reading from the N-terminus, the 299-residue chain is Porphobilinogen deaminase (299 aa).

The residue at position 234 (cysteine 234) is an S-(dipyrrolylmethanemethyl)cysteine.

It belongs to the HMBS family. Monomer. The cofactor is dipyrromethane.

The enzyme catalyses 4 porphobilinogen + H2O = hydroxymethylbilane + 4 NH4(+). It functions in the pathway porphyrin-containing compound metabolism; protoporphyrin-IX biosynthesis; coproporphyrinogen-III from 5-aminolevulinate: step 2/4. Its function is as follows. Tetrapolymerization of the monopyrrole PBG into the hydroxymethylbilane pre-uroporphyrinogen in several discrete steps. This Corynebacterium efficiens (strain DSM 44549 / YS-314 / AJ 12310 / JCM 11189 / NBRC 100395) protein is Porphobilinogen deaminase.